We begin with the raw amino-acid sequence, 1160 residues long: Pesticidal crystal protein Cry8Ca (1160 aa).

The protein belongs to the delta endotoxin family.

Functionally, promotes colloidosmotic lysis by binding to the midgut epithelial cells of insects. Active on various scarabaeid beetles such as Anomala cuprea, A.rufocuprea and Popillia japonica. In Bacillus thuringiensis subsp. japonensis, this protein is Pesticidal crystal protein Cry8Ca (cry8Ca).